The sequence spans 206 residues: Small ribosomal subunit protein uS4 (206 aa).

Residues C96 to E160 enclose the S4 RNA-binding domain.

The protein belongs to the universal ribosomal protein uS4 family. Part of the 30S ribosomal subunit. Contacts protein S5. The interaction surface between S4 and S5 is involved in control of translational fidelity.

Its function is as follows. One of the primary rRNA binding proteins, it binds directly to 16S rRNA where it nucleates assembly of the body of the 30S subunit. In terms of biological role, with S5 and S12 plays an important role in translational accuracy. This is Small ribosomal subunit protein uS4 from Pseudomonas putida (strain GB-1).